The chain runs to 266 residues: Non-structural maintenance of chromosomes element 1 homolog (266 aa).

The segment at 1–102 (MQGSTRRAGA…SVSKMATDFA (102 aa)) is interaction with NSMCE3. Residues 191–232 (CNICHSLLIQGQSCETCGIRMHLPCVAKYFQSTAEPRCPHCN) form an RING-type; atypical zinc finger. The tract at residues 246–266 (EKEREAGISKSSRKSLRTRQH) is disordered. A compositionally biased stretch (basic residues) spans 256–266 (SSRKSLRTRQH).

It belongs to the NSE1 family. As to quaternary structure, component of the SMC5-SMC6 complex which consists at least of SMC5, SMC6, NSMCE2, NSMCE1, NSMCE4A or EID3 and NSMCE3. NSMCE1, NSMCE4A or EID3 and NSMCE3 probably form a subcomplex that bridges the head domains of the SMC5-SMC6 heterodimer. Interacts with NSMCE3. Ubiquitinated.

The protein resides in the nucleus. The protein localises to the chromosome. It localises to the telomere. The enzyme catalyses S-ubiquitinyl-[E2 ubiquitin-conjugating enzyme]-L-cysteine + [acceptor protein]-L-lysine = [E2 ubiquitin-conjugating enzyme]-L-cysteine + N(6)-ubiquitinyl-[acceptor protein]-L-lysine.. RING-type zinc finger-containing E3 ubiquitin ligase that assembles with melanoma antigen protein (MAGE) to catalyze the direct transfer of ubiquitin from E2 ubiquitin-conjugating enzyme to a specific substrate. Within MAGE-RING ubiquitin ligase complex, MAGE stimulates and specifies ubiquitin ligase activity likely through recruitment and/or stabilization of the E2 ubiquitin-conjugating enzyme at the E3:substrate complex. Involved in maintenance of genome integrity, DNA damage response and DNA repair. NSMCE3/MAGEG1 and NSMCE1 ubiquitin ligase are components of SMC5-SMC6 complex and may positively regulate homologous recombination-mediated DNA repair. In Rattus norvegicus (Rat), this protein is Non-structural maintenance of chromosomes element 1 homolog (Nsmce1).